The chain runs to 479 residues: 6-phosphogluconate dehydrogenase, decarboxylating (479 aa).

NADP(+)-binding positions include 10-15, 33-35, 75-77, and Asn-103; these read GLAVMG, NRS, and IKA. Substrate is bound by residues Asn-103 and 129-131; that span reads SGG. Lys-183 functions as the Proton acceptor in the catalytic mechanism. 186 to 187 provides a ligand contact to substrate; the sequence is HN. The active-site Proton donor is the Glu-190. Tyr-191, Lys-260, Arg-287, Arg-447, and His-453 together coordinate substrate.

The protein belongs to the 6-phosphogluconate dehydrogenase family. In terms of assembly, homodimer.

The catalysed reaction is 6-phospho-D-gluconate + NADP(+) = D-ribulose 5-phosphate + CO2 + NADPH. The protein operates within carbohydrate degradation; pentose phosphate pathway; D-ribulose 5-phosphate from D-glucose 6-phosphate (oxidative stage): step 3/3. In terms of biological role, catalyzes the oxidative decarboxylation of 6-phosphogluconate to ribulose 5-phosphate and CO(2), with concomitant reduction of NADP to NADPH. The chain is 6-phosphogluconate dehydrogenase, decarboxylating (gnd) from Chlamydia muridarum (strain MoPn / Nigg).